The primary structure comprises 132 residues: Transcription antitermination protein NusB (132 aa).

This sequence belongs to the NusB family.

Its function is as follows. Involved in transcription antitermination. Required for transcription of ribosomal RNA (rRNA) genes. Binds specifically to the boxA antiterminator sequence of the ribosomal RNA (rrn) operons. In Campylobacter jejuni subsp. jejuni serotype O:6 (strain 81116 / NCTC 11828), this protein is Transcription antitermination protein NusB.